The chain runs to 139 residues: Maintenance of telomere capping protein 7 (139 aa).

2 helical membrane-spanning segments follow: residues 13–33 and 42–62; these read SHHV…FVLL and FYFL…FVFI. The interval 94-121 is disordered; the sequence is RSVANPALPPQKKKKKKKKGTLRTGEVE. The span at 104–114 shows a compositional bias: basic residues; the sequence is QKKKKKKKKGT.

Its subcellular location is the membrane. May be involved in telomere capping. This Saccharomyces cerevisiae (strain ATCC 204508 / S288c) (Baker's yeast) protein is Maintenance of telomere capping protein 7 (MTC7).